The sequence spans 173 residues: Ferric citrate uptake sigma factor FecI (173 aa).

The Polymerase core binding signature appears at 40 to 52 (DIAQDTFLRVMVS). Residues 139 to 158 (YSEIAHKLGVSISSVKKYVA) constitute a DNA-binding region (H-T-H motif).

Belongs to the sigma-70 factor family. ECF subfamily. As to quaternary structure, interacts with FecR (via cytoplasmic N-terminus).

Sigma factors are initiation factors that promote the attachment of RNA polymerase to specific initiation sites and are then released. This sigma factor regulates transcriptional activation of the fecABCDE operon which mediates ferric citrate transport. The polypeptide is Ferric citrate uptake sigma factor FecI (fecI) (Escherichia coli (strain K12)).